The primary structure comprises 62 residues: Bacteriocin lactacin-F subunit LafX (62 aa).

A propeptide spanning residues 1–14 (MKLNDKELSKIVGG) is cleaved from the precursor.

The protein belongs to the bacteriocin class IIB family. As to quaternary structure, this bacteriocin depends upon the complementation of two peptides for activity: LafA and LafX. Associated with a 180 kDa bacteriocin complex.

Functionally, heat stable bacteriocin active against Enterococcus faecalis and other Lactobacilli. The polypeptide is Bacteriocin lactacin-F subunit LafX (lafX) (Lactobacillus johnsonii (strain CNCM I-12250 / La1 / NCC 533)).